A 342-amino-acid chain; its full sequence is Heat-inducible transcription repressor HrcA (342 aa).

The protein belongs to the HrcA family.

Its function is as follows. Negative regulator of class I heat shock genes (grpE-dnaK-dnaJ and groELS operons). Prevents heat-shock induction of these operons. This chain is Heat-inducible transcription repressor HrcA, found in Acholeplasma laidlawii.